A 610-amino-acid polypeptide reads, in one-letter code: Putative protein tag-250 (610 aa).

Tudor domains follow at residues 149-260 (VALK…LLPP) and 386-506 (MPMS…KIGG).

The polypeptide is Putative protein tag-250 (tag-250) (Caenorhabditis elegans).